A 220-amino-acid polypeptide reads, in one-letter code: Large ribosomal subunit protein uL1 (220 aa).

Belongs to the universal ribosomal protein uL1 family. As to quaternary structure, part of the 50S ribosomal subunit.

In terms of biological role, binds directly to 23S rRNA. The L1 stalk is quite mobile in the ribosome, and is involved in E site tRNA release. Functionally, protein L1 is also a translational repressor protein, it controls the translation of the L11 operon by binding to its mRNA. The protein is Large ribosomal subunit protein uL1 of Ehrlichia canis (strain Jake).